The primary structure comprises 133 residues: Profilin-3 (133 aa).

This sequence belongs to the profilin family. In terms of assembly, occurs in many kinds of cells as a complex with monomeric actin in a 1:1 ratio.

The protein localises to the cytoplasm. Its subcellular location is the cytoskeleton. Functionally, binds to actin and affects the structure of the cytoskeleton. At high concentrations, profilin prevents the polymerization of actin, whereas it enhances it at low concentrations. By binding to PIP2, it inhibits the formation of IP3 and DG. This Nicotiana tabacum (Common tobacco) protein is Profilin-3 (PRO3).